A 320-amino-acid chain; its full sequence is D-alanine--D-alanine ligase (320 aa).

The 195-residue stretch at 120-314 (SSWFFANSIN…FTNLIAEIIK (195 aa)) folds into the ATP-grasp domain. 147–198 (MKRPYVIKPLTQGSSIGVEVIFEEDDFNFADYDFPYGDQVVIERYIKGREFQ) contributes to the ATP binding site. Mg(2+) contacts are provided by E267, E281, and N283.

Belongs to the D-alanine--D-alanine ligase family. Mg(2+) serves as cofactor. Mn(2+) is required as a cofactor.

It is found in the cytoplasm. It carries out the reaction 2 D-alanine + ATP = D-alanyl-D-alanine + ADP + phosphate + H(+). The protein operates within cell wall biogenesis; peptidoglycan biosynthesis. Cell wall formation. The sequence is that of D-alanine--D-alanine ligase from Rickettsia akari (strain Hartford).